The following is a 184-amino-acid chain: Photosystem I assembly protein Ycf4 (184 aa).

The next 2 membrane-spanning stretches (helical) occupy residues 22–42 (FGWACILFLGSLGFLVVGASS) and 57–77 (IVFFPQGIVMSFYGIAGLFIS).

It belongs to the Ycf4 family.

It localises to the plastid. The protein localises to the chloroplast thylakoid membrane. Seems to be required for the assembly of the photosystem I complex. The chain is Photosystem I assembly protein Ycf4 from Acorus calamus (Sweet flag).